The following is a 404-amino-acid chain: L-cysteine:1D-myo-inositol 2-amino-2-deoxy-alpha-D-glucopyranoside ligase (404 aa).

Residues Met1–Pro20 are disordered. Cys45 lines the Zn(2+) pocket. L-cysteinyl-5'-AMP is bound by residues Cys45–Thr48, Thr60, and Asn83–Thr85. The 'HIGH' region signature appears at Ile47–His57. The 'ERGGDP' region signature appears at Glu185 to Pro190. The interval Glu185–Gly216 is disordered. Residues Arg186 to Leu199 show a composition bias toward basic and acidic residues. Trp226 serves as a coordination point for L-cysteinyl-5'-AMP. Cys230 contacts Zn(2+). Residue Gly248–Asp250 participates in L-cysteinyl-5'-AMP binding. His255 provides a ligand contact to Zn(2+). Position 280 (Leu280) interacts with L-cysteinyl-5'-AMP. A 'KMSKS' region motif is present at residues Lys286–Ser290.

It belongs to the class-I aminoacyl-tRNA synthetase family. MshC subfamily. Monomer. It depends on Zn(2+) as a cofactor.

It carries out the reaction 1D-myo-inositol 2-amino-2-deoxy-alpha-D-glucopyranoside + L-cysteine + ATP = 1D-myo-inositol 2-(L-cysteinylamino)-2-deoxy-alpha-D-glucopyranoside + AMP + diphosphate + H(+). Its function is as follows. Catalyzes the ATP-dependent condensation of GlcN-Ins and L-cysteine to form L-Cys-GlcN-Ins. In Xylanimonas cellulosilytica (strain DSM 15894 / JCM 12276 / CECT 5975 / KCTC 9989 / LMG 20990 / NBRC 107835 / XIL07), this protein is L-cysteine:1D-myo-inositol 2-amino-2-deoxy-alpha-D-glucopyranoside ligase.